We begin with the raw amino-acid sequence, 205 residues long: Protease (205 aa).

Catalysis depends on residues H55, D72, and C122.

It belongs to the peptidase C5 family. In terms of assembly, interacts with protease cofactor pVI-C; this interaction is necessary for protease activation.

It is found in the virion. The protein localises to the host nucleus. It carries out the reaction Cleaves proteins of the adenovirus and its host cell at two consensus sites: -Yaa-Xaa-Gly-Gly-|-Xaa- and -Yaa-Xaa-Gly-Xaa-|-Gly- (in which Yaa is Met, Ile or Leu, and Xaa is any amino acid).. With respect to regulation, requires DNA and protease cofactor for maximal activation. Inside nascent virions, becomes partially activated by binding to the viral DNA, allowing it to cleave the cofactor that binds to the protease and fully activates it. Actin, like the viral protease cofactor, seems to act as a cofactor in the cleavage of cytokeratin 18 and of actin itself. In terms of biological role, cleaves viral precursor proteins (pTP, pIIIa, pVI, pVII, pVIII, and pX) inside newly assembled particles giving rise to mature virions. Protease complexed to its cofactor slides along the viral DNA to specifically locate and cleave the viral precursors. Mature virions have a weakened organization compared to the unmature virions, thereby facilitating subsequent uncoating. Without maturation, the particle lacks infectivity and is unable to uncoat. Late in adenovirus infection, in the cytoplasm, may participate in the cytoskeleton destruction. Cleaves host cell cytoskeletal keratins K7 and K18. The chain is Protease from Galliformes (FAdV-8).